The following is a 78-amino-acid chain: Small ribosomal subunit protein uS19m (78 aa).

It belongs to the universal ribosomal protein uS19 family.

The protein resides in the mitochondrion. The protein is Small ribosomal subunit protein uS19m (RPS19) of Acanthamoeba castellanii (Amoeba).